Here is a 232-residue protein sequence, read N- to C-terminus: Urease accessory protein UreF (232 aa).

The protein belongs to the UreF family. As to quaternary structure, ureD, UreF and UreG form a complex that acts as a GTP-hydrolysis-dependent molecular chaperone, activating the urease apoprotein by helping to assemble the nickel containing metallocenter of UreC. The UreE protein probably delivers the nickel.

The protein localises to the cytoplasm. Functionally, required for maturation of urease via the functional incorporation of the urease nickel metallocenter. In Trichodesmium erythraeum (strain IMS101), this protein is Urease accessory protein UreF.